A 288-amino-acid chain; its full sequence is Stage IV sporulation protein FB (288 aa).

The Mother cell cytoplasmic portion of the chain corresponds to 1–10 (MNKWLDLILK). Residues 11 to 30 (IHVHPFLWIIAALGLLTGHM) form a helical membrane-spanning segment. A topological domain (forespore intermembrane space) is located at residue Lys-31. The chain crosses the membrane as a helical span at residues 32-56 (ALLCLLLIVLIHELGHAALAVFFSW). His-43 is a binding site for Zn(2+). Glu-44 is a catalytic residue. Residue His-47 coordinates Zn(2+). The Mother cell cytoplasmic portion of the chain corresponds to 57 to 83 (RIKRVFLLPFGGTVEVEEHGNRPLKEE). A helical membrane pass occupies residues 84 to 105 (FAVIIAGPLQHIWLQFAAWMLA). Residues 106–126 (EVSVIHQHTFELFTFYNLSIL) are Forespore intermembrane space-facing. A helical membrane pass occupies residues 127–146 (FVNLLPIWPLDGGKLLFLLF). Asp-137 provides a ligand contact to Zn(2+). The Mother cell cytoplasmic portion of the chain corresponds to 147–161 (SKQLPFQKAHRLNLK). The helical transmembrane segment at 162–178 (TSLCFCLLLGCWVLFVI) threads the bilayer. Pro-179 is a topological domain (forespore intermembrane space). Residues 180 to 199 (LQISAWVLFVFLAVSLFEEY) form a helical membrane-spanning segment. At 200–288 (RQRHYIHVRF…SSMEELLLPY (89 aa)) the chain is on the mother cell cytoplasmic side.

It belongs to the peptidase M50B family. In terms of assembly, forms a complex with SpoIVFA and BofA localized in the mother-cell membrane surrounding the forespore. The cofactor is Zn(2+).

It localises to the forespore outer membrane. Implicated in the coupling of mother cell to forespore gene expression. Required for spore formation. Processes the pro-sigma K factor. The polypeptide is Stage IV sporulation protein FB (spoIVFB) (Bacillus subtilis (strain 168)).